We begin with the raw amino-acid sequence, 452 residues long: NADH-ubiquinone oxidoreductase chain 4 (452 aa).

14 helical membrane-spanning segments follow: residues 4 to 24, 29 to 49, 59 to 79, 88 to 110, 114 to 136, 144 to 164, 182 to 202, 221 to 241, 252 to 272, 282 to 304, 309 to 331, 345 to 365, 390 to 410, and 432 to 452; these read LVLGYVGLVIGVIVTKKSMVW, VGSVLLMLPATVLVNMNMTIS, FVSLGLTVLSIWLLPLMLLAS, LIYQRVFVGCQVFLTGALVLAFM, LLLFYIAFESTLLPTLMLITRWG, AGTYFMFFTLVGSLPLLICLI, VFQLSYLVNFWWVGCILAFLV, PIAGSMVLAGVLLKLGGYGMM, MLSSEVFLALALWGIVVMGGI, LIAYSSVGHMALVVGGVLTGVAW, AMVLMIAHGLVSSCLFCLANLWY, LIMIFPLISLGWFLMSLMNMA, IVYMSLGAVLTAAYSLYLFGM, and LLTTLHLVPAIYLIFYLGLMF.

Belongs to the complex I subunit 4 family.

The protein localises to the mitochondrion membrane. It carries out the reaction a ubiquinone + NADH + 5 H(+)(in) = a ubiquinol + NAD(+) + 4 H(+)(out). In terms of biological role, core subunit of the mitochondrial membrane respiratory chain NADH dehydrogenase (Complex I) that is believed to belong to the minimal assembly required for catalysis. Complex I functions in the transfer of electrons from NADH to the respiratory chain. The immediate electron acceptor for the enzyme is believed to be ubiquinone. This chain is NADH-ubiquinone oxidoreductase chain 4 (ND4), found in Branchiostoma lanceolatum (Common lancelet).